We begin with the raw amino-acid sequence, 334 residues long: MLDDRAKLLLKALVERYIADGQPVGSRTLSKASGLELSPATIRNVMSDLEDLGLIVSPHTSAGRIPTARGYRLFVDTMLTVRQEQFAAHVLAPDQPQKVISNAANLLSSLSQFVGVVIAPRRSSVFRHIEFLRLSERRLLVIIVSPEGDVQNRVIFTETDYSQAQLIEAANYLNSHYVGLAIEQVRERLKNEVESLRSEIASLMQAAVAVSSEAMSETQDEVVISGERNLLAVTDFSNDMGHLRRAFDLFEQKAQLMRLLDIAGQAEGVRIFIGGESQVVPFEDLSIVSAPYEVDGQVVGTLGVIGPTRMAYDRMIQIVDITSKLVSNALSYHK.

Belongs to the HrcA family.

In terms of biological role, negative regulator of class I heat shock genes (grpE-dnaK-dnaJ and groELS operons). Prevents heat-shock induction of these operons. The sequence is that of Heat-inducible transcription repressor HrcA from Albidiferax ferrireducens (strain ATCC BAA-621 / DSM 15236 / T118) (Rhodoferax ferrireducens).